We begin with the raw amino-acid sequence, 44 residues long: Iota-conotoxin-like R11.11 (44 aa).

4 disulfides stabilise this stretch: cysteine 5/cysteine 19, cysteine 12/cysteine 22, cysteine 18/cysteine 27, and cysteine 21/cysteine 36. A propeptide (removed by a carboxypeptidase) is located at residue arginine 44.

It belongs to the conotoxin I1 superfamily. In terms of tissue distribution, expressed by the venom duct.

Its subcellular location is the secreted. Its function is as follows. Iota-conotoxins bind to voltage-gated sodium channels (Nav) and act as agonists by shifting the voltage-dependence of activation to more hyperpolarized levels. Produces general excitatory symptoms. This Conus radiatus (Rayed cone) protein is Iota-conotoxin-like R11.11.